Reading from the N-terminus, the 888-residue chain is Potassium channel AKT6 (888 aa).

Topologically, residues 1-84 (MEKKKVWFWG…PFDPRYRAWE (84 aa)) are cytoplasmic. Residues 10 to 31 (GVKDDGEGGGGRGGGRTKDAED) are disordered. Residues 85-105 (TFLVFLVLYTAWASPFEFGFL) traverse the membrane as a helical segment. The Extracellular portion of the chain corresponds to 106–113 (QKPRPPLS). Residues 114–134 (ILDNIVNGFFAVDIVLTFFVA) traverse the membrane as a helical segment. The Cytoplasmic portion of the chain corresponds to 135 to 155 (FLDKVTYLLVDDPKRIAWRYA). A helical transmembrane segment spans residues 156 to 176 (STWLIFDVVSTFPYEIFGSLL). Over 177–184 (HESIQGYG) the chain is Extracellular. The helical; Voltage-sensor transmembrane segment at 185 to 205 (IFSMLRLWRLRRVSNCFARLE) threads the bilayer. Residues 206-219 (KDRKYSYFWVRCSK) lie on the Cytoplasmic side of the membrane. Residues 220–240 (LLLVTLFVIHCGACFLYSIAA) traverse the membrane as a helical segment. Residues 241-267 (HYPDPSKTFMALTDENWKESPIAVRYN) are Extracellular-facing. Residues 268 to 287 (TAMYWSITTFSTTGYGDIHG) constitute an intramembrane region (pore-forming). Residues 288 to 291 (VNSR) lie on the Extracellular side of the membrane. Residues 292-312 (EMTFILFYMVFNLGLSAYIIG) traverse the membrane as a helical segment. The Cytoplasmic portion of the chain corresponds to 313–888 (NMTNLVVHVT…GDFLLLSRDP (576 aa)). 398–519 (LFHGISNDLL…IMNNLLQHLK (122 aa)) provides a ligand contact to a nucleoside 3',5'-cyclic phosphate. 5 ANK repeats span residues 543–572 (DLPLSLCFAAARGDDLLLHQLLRRGSSPNE), 576–605 (DGRTALHIAASKGSHYCVVLLLEHGADPNI), 609–638 (EGNVPLWEAIIGRHREIAKLLAENGAKLSL), 640–669 (SVSYFSGLAVEKNCLDALKDIIKYGGDVTL), and 673–702 (NGTTALHRAVSEGHLEIVKFLLDQGADLDW). One can recognise a KHA domain in the interval 822–888 (RVTISSPENG…GDFLLLSRDP (67 aa)).

It belongs to the potassium channel family. Plant (TC 1.A.1.4) subfamily. As to quaternary structure, the potassium channel is probably composed of a homo- or heterotetrameric complex of pore-forming subunits. In terms of tissue distribution, predominantly expressed in flowers; especially in pollen.

The protein localises to the membrane. In terms of biological role, highly selective inward-rectifying potassium channel that could mediate potassium uptake in the pollen membrane. Plays an important role in pollen tube development. Assuming opened or closed conformations in response to the voltage difference across the membrane, the channel is activated by hyperpolarization. May interact with the cytoskeleton or with regulatory proteins. The polypeptide is Potassium channel AKT6 (AKT6) (Arabidopsis thaliana (Mouse-ear cress)).